Reading from the N-terminus, the 772-residue chain is RNA exonuclease 5 (772 aa).

Over residues 1–10 (MEPEREGTER) the composition is skewed to basic and acidic residues. Positions 1-26 (MEPEREGTERHPRKVRKRRQAPNKLV) are disordered. The span at 11-21 (HPRKVRKRRQA) shows a compositional bias: basic residues. Positions 228–376 (LFGLDCEMCL…EDARIILELA (149 aa)) constitute an Exonuclease domain. RRM domains follow at residues 505 to 579 (STVY…RPVT) and 600 to 679 (GSIY…RHLH).

The chain is RNA exonuclease 5 (REXO5) from Macaca fascicularis (Crab-eating macaque).